Reading from the N-terminus, the 369-residue chain is Outer membrane porin F (369 aa).

The signal sequence occupies residues Met1–Ala21. The chain crosses the membrane as a beta stranded span at residues Ala22–Lys27. Position 28 (Asp28) is a topological domain, periplasmic. The beta stranded transmembrane segment at Gly29–Phe44 threads the bilayer. Over Ala45–Asp55 the chain is Extracellular. The chain crosses the membrane as a beta stranded span at residues Ser56–Ile68. Over Ser69 to Asp70 the chain is Periplasmic. Residues Gln71–Lys83 traverse the membrane as a beta stranded segment. Residues Ala84–Arg97 are Extracellular-facing. A beta stranded membrane pass occupies residues Leu98–Ala106. The Periplasmic portion of the chain corresponds to Asn107–Tyr108. Residues Gly109 to Arg115 traverse the membrane as a beta stranded segment. Residues Asn116–Thr150 lie on the Extracellular side of the membrane. The beta stranded transmembrane segment at Gly151–Asn157 threads the bilayer. Residues Thr158–Asp165 lie on the Periplasmic side of the membrane. The beta stranded transmembrane segment at Gly166–Asn177 threads the bilayer. Residues Ser178–Gly193 lie on the Extracellular side of the membrane. A beta stranded membrane pass occupies residues Asp194–Val204. The Periplasmic portion of the chain corresponds to Gly205–Tyr206. The beta stranded transmembrane segment at Gly207–Arg219 threads the bilayer. The Extracellular portion of the chain corresponds to Thr220–Arg234. Residues Ala235–Ala246 form a beta stranded membrane-spanning segment. A topological domain (periplasmic) is located at residue Asn247. The beta stranded transmembrane segment at Asn248 to Arg259 threads the bilayer. Topologically, residues Asn260–Asn278 are extracellular. A beta stranded membrane pass occupies residues Lys279 to Phe291. Over Ser292–Leu294 the chain is Periplasmic. A beta stranded membrane pass occupies residues Gly295 to Lys308. At Asp309–Leu320 the chain is on the extracellular side. Residues Val321–Phe332 traverse the membrane as a beta stranded segment. Topologically, residues Asn333–Lys334 are periplasmic. A beta stranded transmembrane segment spans residues Asn335–Ile344. The Extracellular segment spans residues Asn345–Asn359. A beta stranded membrane pass occupies residues Val360–Phe369.

It belongs to the Gram-negative porin family. In terms of assembly, homotrimer.

It is found in the cell outer membrane. Forms pores that allow passive diffusion of small molecules across the outer membrane. The sequence is that of Outer membrane porin F (ompF) from Xenorhabdus nematophila (strain ATCC 19061 / DSM 3370 / CCUG 14189 / LMG 1036 / NCIMB 9965 / AN6).